The chain runs to 246 residues: MEIIPAIDLQNGEAVRLYKGDYDKKTVYSKNPLEIAQKFEQMGAKYLHLVDLDGAKLGQTRNLEIVRKIKDQTNLKIEIGGGIRNLDTVSLYLEQIGVERVILGTAAAEKPDFLKELLVKYGLSRIVVGVDIREGFVSTSGWLEKTTLPYLSFLKDLEKIGVKTVIVTDISKDGTLTGPNFELYDEISKETSLDVIVSGGVKDSSDIQRAADSDFYGIIVGKAYYEGKINLEKEFNHANKKNYPLS.

The active-site Proton acceptor is the aspartate 8. Residue aspartate 131 is the Proton donor of the active site.

It belongs to the HisA/HisF family.

The protein localises to the cytoplasm. The catalysed reaction is 1-(5-phospho-beta-D-ribosyl)-5-[(5-phospho-beta-D-ribosylamino)methylideneamino]imidazole-4-carboxamide = 5-[(5-phospho-1-deoxy-D-ribulos-1-ylimino)methylamino]-1-(5-phospho-beta-D-ribosyl)imidazole-4-carboxamide. It participates in amino-acid biosynthesis; L-histidine biosynthesis; L-histidine from 5-phospho-alpha-D-ribose 1-diphosphate: step 4/9. The polypeptide is 1-(5-phosphoribosyl)-5-[(5-phosphoribosylamino)methylideneamino] imidazole-4-carboxamide isomerase (Lactococcus lactis subsp. cremoris (strain SK11)).